Consider the following 472-residue polypeptide: Dihydrolipoyl dehydrogenase 2 (472 aa).

Residues 39 to 47 (ERDAYGGTC), K56, and A118 contribute to the FAD site. C47 and C52 are joined by a disulfide. Residues 186–190 (GAGYI), E209, and 275–278 (AVGR) contribute to the NAD(+) site. FAD-binding residues include D318 and A326. H450 functions as the Proton acceptor in the catalytic mechanism.

The protein belongs to the class-I pyridine nucleotide-disulfide oxidoreductase family. Homodimer. FAD is required as a cofactor.

It localises to the cytoplasm. The catalysed reaction is N(6)-[(R)-dihydrolipoyl]-L-lysyl-[protein] + NAD(+) = N(6)-[(R)-lipoyl]-L-lysyl-[protein] + NADH + H(+). The protein is Dihydrolipoyl dehydrogenase 2 (lpdA2) of Haloarcula marismortui (strain ATCC 43049 / DSM 3752 / JCM 8966 / VKM B-1809) (Halobacterium marismortui).